The primary structure comprises 664 residues: Sodium/glucose cotransporter 1 (664 aa).

At 1 to 24 (MDSSTWSPPATATAEPLQAYERIR) the chain is on the extracellular side. Residues 25–47 (NAADISVIVIYFVVVMAVGLWAM) form a helical membrane-spanning segment. Topologically, residues 48 to 66 (FSTNRGTVGGFFLAGRSMV) are cytoplasmic. A helical membrane pass occupies residues 67-90 (WWPIGASLFASNIGSGHFVGLAGT). Residues 91–95 (GAAAG) are Extracellular-facing. The helical transmembrane segment at 96–117 (IATGGFEWNALILVVLLGWVFV) threads the bilayer. At 118–139 (PIYIKAGVVTMPEYLRKRFGGQ) the chain is on the cytoplasmic side. Residues 140–169 (RIQVYLSVLSLVLYIFTKISADIFSGAIFI) traverse the membrane as a helical segment. Residues 170 to 176 (NLALGLD) lie on the Extracellular side of the membrane. Residues 177–193 (LYLAIFILLAITALYTI) form a helical membrane-spanning segment. Over 194 to 202 (TGGLAAVIY) the chain is Cytoplasmic. A helical membrane pass occupies residues 203 to 221 (TDTLQTVIMLLGSFILTGF). Residues 222 to 275 (AFHEVGGYSAFVTKYMNAIPTVTSYGNTTVKKECYTPRADSFHIFRDPLKGDLP) are Extracellular-facing. N-linked (GlcNAc...) asparagine glycosylation is present at Asn-248. 5 cysteine pairs are disulfide-bonded: Cys-255/Cys-511, Cys-255/Cys-610, Cys-345/Cys-351, Cys-355/Cys-361, and Cys-517/Cys-522. The chain crosses the membrane as a helical span at residues 276–295 (WPGLIFGLTIISLWYWCTDQ). Over 296-309 (VIVQRCLSAKNMSH) the chain is Cytoplasmic. The helical transmembrane segment at 310-331 (VKAGCIMCGYMKLLPMFLMVMP) threads the bilayer. The Extracellular portion of the chain corresponds to 332-375 (GMISRILFTEKVACTVPSECEKYCGTKVGCTNIAYPTLVVELMP). The chain crosses the membrane as a helical span at residues 376–406 (NGLRGLMLSVMLASLMSSLTSIFNSASTLFT). Residues 407-422 (MDIYTKIRKKASEKEL) lie on the Cytoplasmic side of the membrane. Residues 423–444 (MIAGRLFMLVLIGVSIAWVPIV) form a helical membrane-spanning segment. At 445–451 (QSAQSGQ) the chain is on the extracellular side. Residues 452 to 477 (LFDYIQSITSYLGPPIAAVFLLAIFC) traverse the membrane as a helical segment. D-glucose is bound at residue Gln-457. Residues 478 to 481 (KRVN) are Cytoplasmic-facing. The chain crosses the membrane as a helical span at residues 482–504 (EPGAFWGLIIGFLIGVSRMITEF). The Extracellular segment spans residues 505-525 (AYGTGSCMEPSNCPTIICGVH). A helical membrane pass occupies residues 526 to 547 (YLYFAIILFVITIIVILAISLF). Topologically, residues 548–644 (TKPIADVHLY…TSEKRLWRMV (97 aa)) are cytoplasmic. The helical transmembrane segment at 645–662 (VNINGIILLAVAVFCHAY) threads the bilayer. At 663 to 664 (FA) the chain is on the extracellular side.

It belongs to the sodium:solute symporter (SSF) (TC 2.A.21) family. In terms of processing, N-glycosylation is not necessary for the cotransporter function.

Its subcellular location is the apical cell membrane. The catalysed reaction is D-glucose(out) + 2 Na(+)(out) = D-glucose(in) + 2 Na(+)(in). It catalyses the reaction D-galactose(out) + 2 Na(+)(out) = D-galactose(in) + 2 Na(+)(in). With respect to regulation, enhanced by the interaction with PDZK1IP1/MAP17; but unlike SLC5A2/SGLT2, PDZK1IP1 is not essential for SLC5A1 transporter activity. Possibly modulated by cholesterol binding. Functionally, electrogenic Na(+)-coupled sugar symporter that actively transports D-glucose or D-galactose at the plasma membrane, with a Na(+) to sugar coupling ratio of 2:1. Transporter activity is driven by a transmembrane Na(+) electrochemical gradient set by the Na(+)/K(+) pump. Has a primary role in the transport of dietary monosaccharides from enterocytes to blood. Responsible for the absorption of D-glucose or D-galactose across the apical brush-border membrane of enterocytes, whereas basolateral exit is provided by GLUT2. Additionally, functions as a D-glucose sensor in enteroendocrine cells, triggering the secretion of the incretins GCG and GIP that control food intake and energy homeostasis. Together with SGLT2, functions in reabsorption of D-glucose from glomerular filtrate, playing a nonredundant role in the S3 segment of the proximal tubules. Transports D-glucose into endometrial epithelial cells, controlling glycogen synthesis and nutritional support for the embryo as well as the decidual transformation of endometrium prior to conception. Acts as a water channel enabling passive water transport in response to the osmotic gradient created upon sugar and Na(+) uptake. Has high water conductivity comparable to aquaporins and therefore is expected to play an important role in transepithelial water permeability, especially in the small intestine. The protein is Sodium/glucose cotransporter 1 (SLC5A1) of Ovis aries (Sheep).